We begin with the raw amino-acid sequence, 331 residues long: Glycerol-3-phosphate dehydrogenase [NAD(P)+] (331 aa).

NADPH is bound by residues Ser11, Phe12, Arg32, and Lys106. 3 residues coordinate sn-glycerol 3-phosphate: Lys106, Gly134, and Ser136. Ala138 is an NADPH binding site. Residues Lys189, Asp242, Ser252, Arg253, and Asn254 each contribute to the sn-glycerol 3-phosphate site. The Proton acceptor role is filled by Lys189. Arg253 is a binding site for NADPH. Positions 277 and 279 each coordinate NADPH.

This sequence belongs to the NAD-dependent glycerol-3-phosphate dehydrogenase family.

The protein resides in the cytoplasm. It catalyses the reaction sn-glycerol 3-phosphate + NAD(+) = dihydroxyacetone phosphate + NADH + H(+). It carries out the reaction sn-glycerol 3-phosphate + NADP(+) = dihydroxyacetone phosphate + NADPH + H(+). It participates in membrane lipid metabolism; glycerophospholipid metabolism. Functionally, catalyzes the reduction of the glycolytic intermediate dihydroxyacetone phosphate (DHAP) to sn-glycerol 3-phosphate (G3P), the key precursor for phospholipid synthesis. The sequence is that of Glycerol-3-phosphate dehydrogenase [NAD(P)+] from Clostridium perfringens (strain ATCC 13124 / DSM 756 / JCM 1290 / NCIMB 6125 / NCTC 8237 / Type A).